The sequence spans 456 residues: Sulfoacetaldehyde dehydrogenase (456 aa).

An NAD(+)-binding site is contributed by 213-218; sequence GGTAAA. Active-site residues include Glu233 and Cys267.

It belongs to the aldehyde dehydrogenase family. As to quaternary structure, homotetramer.

It catalyses the reaction sulfoacetaldehyde + NAD(+) + H2O = sulfoacetate + NADH + 2 H(+). Mediates conversion of 2-sulfoacetaldehyde into sulfoacetate. The enzyme is specific for NAD; NADP is not a substrate. Part of a pathway that can utilize the amino group of taurine as a sole source of nitrogen for growth. In Neptuniibacter caesariensis, this protein is Sulfoacetaldehyde dehydrogenase (safD).